Reading from the N-terminus, the 61-residue chain is Neurotoxin-like protein 1 (61 aa).

4 disulfide bridges follow: Cys-3-Cys-24, Cys-17-Cys-38, Cys-42-Cys-53, and Cys-54-Cys-59.

Expressed by the venom gland.

The protein resides in the secreted. This is Neurotoxin-like protein 1 from Causus rhombeatus (Rhombic night adder).